The primary structure comprises 109 residues: Nucleoid-associated protein Ldb1634 (109 aa).

Residues 18–40 (MMKQAKKLQEQMAQEQENITTQE) are disordered.

This sequence belongs to the YbaB/EbfC family. As to quaternary structure, homodimer.

It localises to the cytoplasm. It is found in the nucleoid. In terms of biological role, binds to DNA and alters its conformation. May be involved in regulation of gene expression, nucleoid organization and DNA protection. This is Nucleoid-associated protein Ldb1634 from Lactobacillus delbrueckii subsp. bulgaricus (strain ATCC 11842 / DSM 20081 / BCRC 10696 / JCM 1002 / NBRC 13953 / NCIMB 11778 / NCTC 12712 / WDCM 00102 / Lb 14).